A 110-amino-acid chain; its full sequence is Parvalbumin alpha (110 aa).

The residue at position 2 (Ser2) is an N-acetylserine. 2 positions are modified to phosphoserine: Ser2 and Ser24. EF-hand domains lie at 39 to 74 (KSADDVKKVFHMLDKDKSGFIEEDELGFILKGFSPD) and 78 to 110 (LSAKETKMLMAAGDKDGDGKIGVDEFSTLVAES). Asp52, Asp54, Ser56, Phe58, Glu60, Glu63, Asp91, Asp93, Asp95, Lys97, and Glu102 together coordinate Ca(2+).

Its function is as follows. In muscle, parvalbumin is thought to be involved in relaxation after contraction. It binds two calcium ions. The chain is Parvalbumin alpha (PVALB) from Homo sapiens (Human).